We begin with the raw amino-acid sequence, 372 residues long: Alanine racemase (372 aa).

The Proton acceptor; specific for D-alanine role is filled by Lys37. Lys37 carries the post-translational modification N6-(pyridoxal phosphate)lysine. Arg136 provides a ligand contact to substrate. Tyr265 serves as the catalytic Proton acceptor; specific for L-alanine. A substrate-binding site is contributed by Met313.

Belongs to the alanine racemase family. Pyridoxal 5'-phosphate is required as a cofactor.

The catalysed reaction is L-alanine = D-alanine. It functions in the pathway amino-acid biosynthesis; D-alanine biosynthesis; D-alanine from L-alanine: step 1/1. Its function is as follows. Catalyzes the interconversion of L-alanine and D-alanine. May also act on other amino acids. The chain is Alanine racemase (alr) from Synechocystis sp. (strain ATCC 27184 / PCC 6803 / Kazusa).